A 230-amino-acid chain; its full sequence is Ribonuclease 3 (230 aa).

The RNase III domain occupies 5-134; sequence EALLKSSFAI…FLGALLLDKG (130 aa). A Mg(2+)-binding site is contributed by Glu47. The active site involves Asp51. Positions 120 and 123 each coordinate Mg(2+). Glu123 is a catalytic residue. Positions 160-229 constitute a DRBM domain; that stretch reads DYKTSLQEIL…AENALKALSE (70 aa).

Belongs to the ribonuclease III family. Homodimer. Mg(2+) serves as cofactor.

It localises to the cytoplasm. It carries out the reaction Endonucleolytic cleavage to 5'-phosphomonoester.. Functionally, digests double-stranded RNA. Involved in the processing of primary rRNA transcript to yield the immediate precursors to the large and small rRNAs (23S and 16S). Processes some mRNAs, and tRNAs when they are encoded in the rRNA operon. Processes pre-crRNA and tracrRNA of type II CRISPR loci if present in the organism. The chain is Ribonuclease 3 from Streptococcus uberis (strain ATCC BAA-854 / 0140J).